The following is a 93-amino-acid chain: Small ribosomal subunit protein uS19 (93 aa).

Belongs to the universal ribosomal protein uS19 family.

Protein S19 forms a complex with S13 that binds strongly to the 16S ribosomal RNA. This is Small ribosomal subunit protein uS19 from Anaplasma marginale (strain Florida).